We begin with the raw amino-acid sequence, 225 residues long: Uridylate kinase (225 aa).

Position 9–10 (9–10 (GS)) interacts with ATP. A UMP-binding site is contributed by Gly46. Residues Gly47 and Arg51 each coordinate ATP. UMP is bound by residues Asp67 and 115–121 (THPAHTT). ATP-binding residues include Thr141, Asn142, Tyr147, and Asp150.

This sequence belongs to the UMP kinase family. Homohexamer.

It is found in the cytoplasm. The catalysed reaction is UMP + ATP = UDP + ADP. Its pathway is pyrimidine metabolism; CTP biosynthesis via de novo pathway; UDP from UMP (UMPK route): step 1/1. Its activity is regulated as follows. Inhibited by UTP. Its function is as follows. Catalyzes the reversible phosphorylation of UMP to UDP. The polypeptide is Uridylate kinase (Methanococcus maripaludis (strain C5 / ATCC BAA-1333)).